Consider the following 448-residue polypeptide: tRNA modification GTPase MnmE (448 aa).

(6S)-5-formyl-5,6,7,8-tetrahydrofolate contacts are provided by arginine 24, glutamate 81, and lysine 120. The region spanning 216 to 373 is the TrmE-type G domain; that stretch reads GLNVVLVGAP…LKRTLLCEAG (158 aa). Asparagine 226 lines the K(+) pocket. Residues 226–231, 245–251, and 270–273 contribute to the GTP site; these read NVGKSS, TDIAGTT, and DTAG. Residue serine 230 coordinates Mg(2+). Residues threonine 245, isoleucine 247, and threonine 250 each coordinate K(+). Residue threonine 251 coordinates Mg(2+). Lysine 448 provides a ligand contact to (6S)-5-formyl-5,6,7,8-tetrahydrofolate.

This sequence belongs to the TRAFAC class TrmE-Era-EngA-EngB-Septin-like GTPase superfamily. TrmE GTPase family. Homodimer. Heterotetramer of two MnmE and two MnmG subunits. K(+) serves as cofactor.

The protein localises to the cytoplasm. Exhibits a very high intrinsic GTPase hydrolysis rate. Involved in the addition of a carboxymethylaminomethyl (cmnm) group at the wobble position (U34) of certain tRNAs, forming tRNA-cmnm(5)s(2)U34. In Neisseria gonorrhoeae (strain ATCC 700825 / FA 1090), this protein is tRNA modification GTPase MnmE.